The primary structure comprises 248 residues: PF03932 family protein CutC (248 aa).

Belongs to the CutC family. As to quaternary structure, homodimer.

It is found in the cytoplasm. This is PF03932 family protein CutC from Salmonella newport (strain SL254).